The primary structure comprises 29 residues: Varv peptide F (29 aa).

Residues 1–29 constitute a cross-link (cyclopeptide (Gly-Asn)); sequence GVPICGETCTLGTCYTAGCSCSWPVCTRN. Disulfide bonds link Cys5–Cys19, Cys9–Cys21, and Cys14–Cys26.

Post-translationally, this is a cyclic peptide.

Functionally, probably participates in a plant defense mechanism. Has cytotoxic activity against a variety of drug-resistant and drug-sensitive human tumor cell lines. The polypeptide is Varv peptide F (Viola arvensis (European field pansy)).